Here is a 47-residue protein sequence, read N- to C-terminus: AIKLVQSPNGNFAASFVLDGTKWIFKSKYYDSSKGYWVGIYEVWDRK.

It localises to the secreted. Has antibacterial activity against X.oryzae pv oryzae and R.solanacearum, but not E.coli or P.carotovorum subsp carotovorum. May bind DNA or mRNA. This is Antimicrobial peptide LCI from Bacillus subtilis.